The following is a 181-amino-acid chain: Large ribosomal subunit protein uL5 (181 aa).

This sequence belongs to the universal ribosomal protein uL5 family. As to quaternary structure, part of the 50S ribosomal subunit; part of the 5S rRNA/L5/L18/L25 subcomplex. Contacts the 5S rRNA and the P site tRNA. Forms a bridge to the 30S subunit in the 70S ribosome.

Its function is as follows. This is one of the proteins that bind and probably mediate the attachment of the 5S RNA into the large ribosomal subunit, where it forms part of the central protuberance. In the 70S ribosome it contacts protein S13 of the 30S subunit (bridge B1b), connecting the 2 subunits; this bridge is implicated in subunit movement. Contacts the P site tRNA; the 5S rRNA and some of its associated proteins might help stabilize positioning of ribosome-bound tRNAs. In Mesomycoplasma hyopneumoniae (strain 7448) (Mycoplasma hyopneumoniae), this protein is Large ribosomal subunit protein uL5.